Consider the following 689-residue polypeptide: Transcription factor MYC2 (689 aa).

The interval 94–172 is JAZ-interaction domain; that stretch reads LQQRLQALID…VLRELNSLIS (79 aa). Positions 316–349 are enriched in polar residues; that stretch reads NTVQTNSVPSSNSNKQIAYGNENNHPSGNGQSCY. Disordered stretches follow at residues 316–361 and 420–519; these read NTVQ…PQQQ and QSQF…EAER. Residues 350–361 are compositionally biased toward low complexity; it reads NQQQQKNPPQQQ. Positions 471 to 495 are enriched in basic and acidic residues; it reads DSEHSDLEASVVKEADSSRVVEPEK. A compositionally biased stretch (basic residues) spans 496 to 505; it reads RPRKRGRKPA. The span at 506–519 shows a compositional bias: basic and acidic residues; the sequence is NGREEPLNHVEAER. The segment at 509 to 522 is basic motif; degenerate; sequence EEPLNHVEAERQRR. Positions 509–558 constitute a bHLH domain; it reads EEPLNHVEAERQRREKLNQRFYALRAVVPNVSKMDKASLLGDAISYINEL. Residues 523–558 are helix-loop-helix motif; that stretch reads EKLNQRFYALRAVVPNVSKMDKASLLGDAISYINEL. The interval 563 to 602 is disordered; that stretch reads QNTESDKEDLKSQIEDLKKESRRPGPPPPPNQDLKMSSHT. Residues 566 to 585 are compositionally biased toward basic and acidic residues; it reads ESDKEDLKSQIEDLKKESRR.

In terms of assembly, interacts (via N-terminus) with MED25. Interacts (via N-terminus) with JAZ7. MED25 and JAZ7 compete with each other to bind to MYC2. Interacts (via N-terminus) with MTB1. MTB1 and MED25 compete with each other to bind to MYC2. Expressed at low levels in roots, stems, leaves, flowers and fruits.

Its subcellular location is the nucleus. In terms of biological role, transcriptional activator that binds to the G-box motif (5'-AACGTG-3') found in the promoter of the jasmonate-induced gene LAPA1. Acts as a negative regulator of blue light-mediated photomorphogenesis and positively regulates root growth. Promotes growth in response to the phytohormones abscisic acid (ABA) and jasmonate (JA). Binds to the G-box motif (5'-CACGTG-3') of the RBCS-3A gene promoter. Acts downstream of the jasmonate (JA) receptor to orchestrate JA-mediated activation of plant responses. Positively regulates both wound-responsive and pathogen-responsive genes through MYC2-targeted transcription factors (MTFs) involved in early response to JA. With JA2L forms a transcription module that regulates wounding-responsive genes. With ERF.C3 forms a transcription module that regulates pathogen-responsive genes. Plays a critical role in orchestrating JA-mediated defense gene expression during Botrytis cinerea infection. Negatively regulates defense responses to root-knot nematodes, potentially by mediating crosstalk among the hormones strigolactones, abscisic acid (ABA) and jasmonate (JA). Regulates the termination of JA-mediated defense responses by specifically binding the G-box (5'-CACATG-3') motifs in the promoters of MTB1, MTB2 and MTB3, which are transcription factors that negatively regulates JA signaling. May be involved in JA-induced chilling tolerance, possibly by ameliorating the antioxidant enzyme system of fruit and increasing proline and lycopene levels. The polypeptide is Transcription factor MYC2 (Solanum lycopersicum (Tomato)).